The chain runs to 215 residues: Heart- and neural crest derivatives-expressed protein 1 (215 aa).

Disordered stretches follow at residues 53 to 109 (APDF…RTES) and 166 to 198 (LKKADGGRESKRKRELQQHEGFPPALGPVEKRI). Low complexity predominate over residues 65 to 89 (AAAAATAYGPDARPGQSPGRLEALG). Positions 92–104 (LGRRKGSGPKKER) are enriched in basic residues. One can recognise a bHLH domain in the interval 94 to 146 (RRKGSGPKKERRRTESINSAFAELRECIPNVPADTKLSKIKTLRLATSYIAYL). Position 107 is a phosphothreonine; by PLK4 (T107). S109 carries the post-translational modification Phosphoserine; by PLK4.

As to quaternary structure, efficient DNA binding requires dimerization with another bHLH protein. Forms homodimers and heterodimers with TCF3 gene products E12 and E47, HAND2 and HEY1, HEY2 and HEYL (hairy-related transcription factors). Interacts with MDFIC. Interacts with SOX15; the interaction enhances HAND1-induced differentiation of trophoblast giant cells. In terms of processing, phosphorylation by PLK4 disrupts the interaction with MDFIC and leads to translocation into the nucleoplasm, allowing dimerization and transcription factor activity. Heart.

The protein resides in the nucleus. It is found in the nucleoplasm. The protein localises to the nucleolus. Transcription factor that plays an essential role in both trophoblast giant cell differentiation and in cardiac morphogenesis. Binds the DNA sequence 5'-NRTCTG-3' (non-canonical E-box). Acts as a transcriptional repressor of SOX15. In the adult, could be required for ongoing expression of cardiac-specific genes. The chain is Heart- and neural crest derivatives-expressed protein 1 (HAND1) from Homo sapiens (Human).